The following is a 686-amino-acid chain: Bromodomain-containing factor 1 (686 aa).

Disordered stretches follow at residues methionine 1–leucine 69 and asparagine 85–proline 150. The span at asparagine 9–asparagine 25 shows a compositional bias: low complexity. Residues glutamine 99–lysine 120 show a composition bias toward basic and acidic residues. A compositionally biased stretch (pro residues) spans glutamate 130–proline 139. In terms of domain architecture, Bromo 1 spans proline 145 to methionine 254. Residue serine 270 is modified to Phosphoserine. Positions glutamine 283 to tyrosine 304 are disordered. Residues glycine 287–proline 296 show a composition bias toward basic residues. The Bromo 2 domain maps to lysine 312 to arginine 421. Disordered stretches follow at residues leucine 424–serine 447, isoleucine 486–lysine 523, serine 594–arginine 636, and aspartate 649–glutamate 686. Serine 429 carries the post-translational modification Phosphoserine. The span at aspartate 438–serine 447 shows a compositional bias: acidic residues. The stretch at alanine 460–arginine 499 forms a coiled coil. Residues lysine 488–serine 507 show a composition bias toward basic residues. Positions arginine 518–serine 598 constitute an NET domain. Composition is skewed to polar residues over residues serine 594 to glycine 620 and serine 652 to phenylalanine 671. Phosphoserine occurs at positions 615 and 659. The segment covering serine 675 to glutamate 686 has biased composition (acidic residues).

It belongs to the BET family. Interacts with the TFIID subunit TAF7 and with acetylated histones H3 and H4. Phosphorylated by the casein kinase CK2 complex.

Its subcellular location is the nucleus. In terms of biological role, transcription factor involved in the expression of a broad class of genes including snRNAs. Required for sporulation and DNA-damage repair. Prevents the spreading of SIR silencing at telomeres and protects histone H4, but not H3, from deacetylation. The protein is Bromodomain-containing factor 1 (BDF1) of Saccharomyces cerevisiae (strain ATCC 204508 / S288c) (Baker's yeast).